Consider the following 351-residue polypeptide: (S)-coclaurine N-methyltransferase (351 aa).

Residues 91 to 92 (QS), 126 to 134 (VLDLGCGLG), 130 to 132 (GCG), and 153 to 158 (TSSVEQ) contribute to the S-adenosyl-L-methionine site. C326 is an active-site residue.

It belongs to the CFA/CMAS family. Expressed in roots, stems, flower buds and at lower levels, in leaves. Restricted to sieve elements of the phloem adjacent or proximal to laticifers.

Its subcellular location is the cytoplasm. The catalysed reaction is (S)-coclaurine + S-adenosyl-L-methionine = (S)-N-methylcoclaurine + S-adenosyl-L-homocysteine + H(+). The protein operates within alkaloid biosynthesis; (S)-reticuline biosynthesis; (S)-reticuline from (S)-norcoclaurine: step 2/4. Its function is as follows. Involved in the biosynthesis of benzylisoquinoline alkaloids. N-methyltransferase methylating (S)-coclaurine. 4'-O-methylcoclaurine and norlaudanine can also be used as substrates. The protein is (S)-coclaurine N-methyltransferase of Papaver somniferum (Opium poppy).